The following is a 446-amino-acid chain: Exodeoxyribonuclease 7 large subunit (446 aa).

The protein belongs to the XseA family. Heterooligomer composed of large and small subunits.

The protein localises to the cytoplasm. It catalyses the reaction Exonucleolytic cleavage in either 5'- to 3'- or 3'- to 5'-direction to yield nucleoside 5'-phosphates.. In terms of biological role, bidirectionally degrades single-stranded DNA into large acid-insoluble oligonucleotides, which are then degraded further into small acid-soluble oligonucleotides. This chain is Exodeoxyribonuclease 7 large subunit, found in Staphylococcus carnosus (strain TM300).